A 404-amino-acid polypeptide reads, in one-letter code: Pyrophosphate--fructose 6-phosphate 1-phosphotransferase (404 aa).

Gly13 contacts diphosphate. Asn108 lines the Mg(2+) pocket. Substrate contacts are provided by residues 136 to 138, 180 to 182, Glu237, and 295 to 298; these read TID, MGR, and YLQR. Asp138 acts as the Proton acceptor in catalysis.

Belongs to the phosphofructokinase type A (PFKA) family. PPi-dependent PFK group II subfamily. Clade 'B2' sub-subfamily. In terms of assembly, homodimer. It depends on Mg(2+) as a cofactor.

It localises to the cytoplasm. It catalyses the reaction beta-D-fructose 6-phosphate + diphosphate = beta-D-fructose 1,6-bisphosphate + phosphate + H(+). It functions in the pathway carbohydrate degradation; glycolysis; D-glyceraldehyde 3-phosphate and glycerone phosphate from D-glucose: step 3/4. Non-allosteric. Its function is as follows. Catalyzes the phosphorylation of D-fructose 6-phosphate, the first committing step of glycolysis. Uses inorganic phosphate (PPi) as phosphoryl donor instead of ATP like common ATP-dependent phosphofructokinases (ATP-PFKs), which renders the reaction reversible, and can thus function both in glycolysis and gluconeogenesis. Consistently, PPi-PFK can replace the enzymes of both the forward (ATP-PFK) and reverse (fructose-bisphosphatase (FBPase)) reactions. This Rhodospirillum rubrum (strain ATCC 11170 / ATH 1.1.1 / DSM 467 / LMG 4362 / NCIMB 8255 / S1) protein is Pyrophosphate--fructose 6-phosphate 1-phosphotransferase.